We begin with the raw amino-acid sequence, 609 residues long: Pair-rule protein odd-paired (609 aa).

Positions 20-41 (RMSPNTTASNSNAQQQQQQQLE) are disordered. The span at 22–32 (SPNTTASNSNA) shows a compositional bias: polar residues. A C2H2-type 1; atypical zinc finger spans residues 210–249 (MQCLWIDPDQPGLVPPGGRKTCNKVFHSMHEIVTHLTVEH). C2H2-type zinc fingers lie at residues 258–285 (HACFWVGCSRNGRPFKAKYKLVNHIRVH), 291–315 (FACPHPGCGKVFARSENLKIHKRTH), 321–345 (FKCEHEGCDRRFANSSDRKKHSHVH), and 351–375 (YNCRINGCDKSYTHPSSLRKHMKVH). Disordered regions lie at residues 373 to 550 (KVHG…ASAS) and 583 to 609 (EAMNPLNHFGHHHHHHHLMHPGAATAY). Over residues 399–409 (IITGGAQTPPS) the composition is skewed to polar residues. Low complexity-rich tracts occupy residues 414–434 (GSAGSSSGVSSLSGGSGIKSS) and 449–498 (HLGA…LTAH). Basic residues predominate over residues 528–537 (SHHHHPHHHQ). The span at 538-550 (AAPSPGAAAASAS) shows a compositional bias: low complexity. The segment covering 591–601 (FGHHHHHHHLM) has biased composition (basic residues).

It belongs to the GLI C2H2-type zinc-finger protein family. As to expression, expressed throughout all segment primordia; expressed ubiquitously in the ectoderm and mesoderm precursors.

The protein localises to the nucleus. Functionally, transcription factor essential for parasegmental subdivision of the embryo. It is involved in the activation of wingless (wg) in odd parasegments. It is also required for the timely activation of wg in the remaining parasegments and for the timely activation of engrailed (en) in all parasegments. The protein is Pair-rule protein odd-paired (opa) of Drosophila melanogaster (Fruit fly).